The sequence spans 127 residues: DNA-directed RNA polymerase subunit omega (127 aa).

This sequence belongs to the RNA polymerase subunit omega family. The RNAP catalytic core consists of 2 alpha, 1 beta, 1 beta' and 1 omega subunit. When a sigma factor is associated with the core the holoenzyme is formed, which can initiate transcription.

The catalysed reaction is RNA(n) + a ribonucleoside 5'-triphosphate = RNA(n+1) + diphosphate. Its function is as follows. Promotes RNA polymerase assembly. Latches the N- and C-terminal regions of the beta' subunit thereby facilitating its interaction with the beta and alpha subunits. This chain is DNA-directed RNA polymerase subunit omega, found in Rickettsia peacockii (strain Rustic).